We begin with the raw amino-acid sequence, 797 residues long: Xaa-Pro dipeptidyl-peptidase (797 aa).

Catalysis depends on charge relay system residues S370, D490, and H521.

This sequence belongs to the peptidase S15 family. Homodimer.

It is found in the cytoplasm. The enzyme catalyses Hydrolyzes Xaa-Pro-|- bonds to release unblocked, N-terminal dipeptides from substrates including Ala-Pro-|-p-nitroanilide and (sequentially) Tyr-Pro-|-Phe-Pro-|-Gly-Pro-|-Ile.. In terms of biological role, removes N-terminal dipeptides sequentially from polypeptides having unsubstituted N-termini provided that the penultimate residue is proline. The sequence is that of Xaa-Pro dipeptidyl-peptidase from Lacticaseibacillus rhamnosus (Lactobacillus rhamnosus).